The sequence spans 33 residues: U23-ctenitoxin-Pn1a (33 aa).

3 disulfides stabilise this stretch: Cys-3–Cys-16, Cys-10–Cys-21, and Cys-15–Cys-30.

In terms of tissue distribution, expressed by the venom gland.

It localises to the secreted. Functionally, non-toxic to mice. The polypeptide is U23-ctenitoxin-Pn1a (Phoneutria nigriventer (Brazilian armed spider)).